Here is an 89-residue protein sequence, read N- to C-terminus: Small ribosomal subunit protein uS14A (89 aa).

This sequence belongs to the universal ribosomal protein uS14 family. As to quaternary structure, part of the 30S ribosomal subunit. Contacts proteins S3 and S10.

Binds 16S rRNA, required for the assembly of 30S particles and may also be responsible for determining the conformation of the 16S rRNA at the A site. The protein is Small ribosomal subunit protein uS14A of Listeria welshimeri serovar 6b (strain ATCC 35897 / DSM 20650 / CCUG 15529 / CIP 8149 / NCTC 11857 / SLCC 5334 / V8).